The sequence spans 78 residues: MKRNIFCHFMKNFHERLDFPPYPGSIGKKIYKNISKKAWEIWKNHQTILINEKQLNMLNKKDRKTIEIEMINFLFKNK.

It belongs to the Fe(2+)-trafficking protein family. Monomer.

Functionally, could be a mediator in iron transactions between iron acquisition and iron-requiring processes, such as synthesis and/or repair of Fe-S clusters in biosynthetic enzymes. This is Probable Fe(2+)-trafficking protein from Wigglesworthia glossinidia brevipalpis.